The following is a 374-amino-acid chain: Muconate cycloisomerase 1 (374 aa).

The protein belongs to the cycloisomerase 2 family. Homotetramer.

It catalyses the reaction (S)-muconolactone = cis,cis-muconate + H(+). The protein operates within aromatic compound metabolism; beta-ketoadipate pathway; 5-oxo-4,5-dihydro-2-furylacetate from catechol: step 2/3. In terms of biological role, catalyzes a syn cycloisomerization. This is Muconate cycloisomerase 1 from Cutaneotrichosporon cutaneum (Yeast).